We begin with the raw amino-acid sequence, 343 residues long: Zinc finger CCCH domain-containing protein 1 (343 aa).

The interval 1 to 102 (MSDSGEPKPS…PERSVFHYDS (102 aa)) is disordered. A compositionally biased stretch (low complexity) spans 7–25 (PKPSQQEEPLPQPAAQETQ). Positions 35 to 44 (KPTKSKNIRK) are enriched in basic residues. Low complexity predominate over residues 79–91 (SSGPSKSSTTTSG). A C3H1-type zinc finger spans residues 200–228 (DYQPDICKDYKETGYCGYGDSCKFLHDRG). The segment at 249–268 (RNKAMGVEDEDDEADKDSDE) is disordered. Over residues 255-268 (VEDEDDEADKDSDE) the composition is skewed to acidic residues. The RING-type zinc finger occupies 277–315 (CFICREPFVDPVVTKCKHYFCEHCALKHHTKNKKCFVCN).

This chain is Zinc finger CCCH domain-containing protein 1, found in Arabidopsis thaliana (Mouse-ear cress).